Reading from the N-terminus, the 263-residue chain is Hydroxyethylthiazole kinase 1 (263 aa).

Residue M42 participates in substrate binding. ATP is bound by residues K118 and T164. G191 contacts substrate.

The protein belongs to the Thz kinase family. Requires Mg(2+) as cofactor.

It carries out the reaction 5-(2-hydroxyethyl)-4-methylthiazole + ATP = 4-methyl-5-(2-phosphooxyethyl)-thiazole + ADP + H(+). Its pathway is cofactor biosynthesis; thiamine diphosphate biosynthesis; 4-methyl-5-(2-phosphoethyl)-thiazole from 5-(2-hydroxyethyl)-4-methylthiazole: step 1/1. Functionally, catalyzes the phosphorylation of the hydroxyl group of 4-methyl-5-beta-hydroxyethylthiazole (THZ). This chain is Hydroxyethylthiazole kinase 1, found in Clostridium botulinum (strain Kyoto / Type A2).